A 337-amino-acid chain; its full sequence is MLVLGIETSCDETGVALYDSSKGLLAHRLYSQVDEHAMYGGVVPEIASRDHLRKLLPLVREVLAAGGVRRTAIGGIAYTAGPGLIGALLVGAAVARSLAWAWSVPAIAVHHMEGHLLAPLLEPEPPEFPFVALLVSGGHTLLVEVRGIGVYQVLGESLDDAAGEAFDKTAKLLGLGYPGGPALARLAEKGRAERFHFPRPMTDRPGLDFSFSGLKTHALNVLAALPGTPQDKADIACAFQAAIVDTLVLKCRRAMRETGLGRLVVAGGVSANQAVRKGLQAMAESERYRVYFPRPEFCTDNGAMIAFAGCWRLRAGQFEPSAIEARARWAMETLTAV.

Fe cation-binding residues include His111 and His115. Substrate-binding positions include 134–138 (LVSGG), Asp167, Gly180, and Asn272. Asp300 is a Fe cation binding site.

It belongs to the KAE1 / TsaD family. The cofactor is Fe(2+).

It localises to the cytoplasm. The enzyme catalyses L-threonylcarbamoyladenylate + adenosine(37) in tRNA = N(6)-L-threonylcarbamoyladenosine(37) in tRNA + AMP + H(+). In terms of biological role, required for the formation of a threonylcarbamoyl group on adenosine at position 37 (t(6)A37) in tRNAs that read codons beginning with adenine. Is involved in the transfer of the threonylcarbamoyl moiety of threonylcarbamoyl-AMP (TC-AMP) to the N6 group of A37, together with TsaE and TsaB. TsaD likely plays a direct catalytic role in this reaction. The sequence is that of tRNA N6-adenosine threonylcarbamoyltransferase from Methylococcus capsulatus (strain ATCC 33009 / NCIMB 11132 / Bath).